The sequence spans 241 residues: 2-C-methyl-D-erythritol 4-phosphate cytidylyltransferase (241 aa).

This sequence belongs to the IspD/TarI cytidylyltransferase family. IspD subfamily. As to quaternary structure, homodimer.

It carries out the reaction 2-C-methyl-D-erythritol 4-phosphate + CTP + H(+) = 4-CDP-2-C-methyl-D-erythritol + diphosphate. Its pathway is isoprenoid biosynthesis; isopentenyl diphosphate biosynthesis via DXP pathway; isopentenyl diphosphate from 1-deoxy-D-xylulose 5-phosphate: step 2/6. Its function is as follows. Catalyzes the formation of 4-diphosphocytidyl-2-C-methyl-D-erythritol from CTP and 2-C-methyl-D-erythritol 4-phosphate (MEP). The polypeptide is 2-C-methyl-D-erythritol 4-phosphate cytidylyltransferase (Yersinia pseudotuberculosis serotype I (strain IP32953)).